We begin with the raw amino-acid sequence, 274 residues long: Shikimate dehydrogenase (NADP(+)) (274 aa).

Residues 14–16 (SQS) and threonine 61 contribute to the shikimate site. Lysine 65 functions as the Proton acceptor in the catalytic mechanism. The shikimate site is built by asparagine 86 and aspartate 102. Residues 128 to 132 (GAGGA), 151 to 156 (NRTVEK), and leucine 215 contribute to the NADP(+) site. Residue tyrosine 217 participates in shikimate binding. Residue glycine 239 coordinates NADP(+).

Belongs to the shikimate dehydrogenase family. In terms of assembly, homodimer.

The catalysed reaction is shikimate + NADP(+) = 3-dehydroshikimate + NADPH + H(+). The protein operates within metabolic intermediate biosynthesis; chorismate biosynthesis; chorismate from D-erythrose 4-phosphate and phosphoenolpyruvate: step 4/7. Involved in the biosynthesis of the chorismate, which leads to the biosynthesis of aromatic amino acids. Catalyzes the reversible NADPH linked reduction of 3-dehydroshikimate (DHSA) to yield shikimate (SA). This is Shikimate dehydrogenase (NADP(+)) from Proteus mirabilis (strain HI4320).